A 129-amino-acid chain; its full sequence is UPF0212 protein MM_2357 (129 aa).

Belongs to the UPF0212 family.

The chain is UPF0212 protein MM_2357 from Methanosarcina mazei (strain ATCC BAA-159 / DSM 3647 / Goe1 / Go1 / JCM 11833 / OCM 88) (Methanosarcina frisia).